The chain runs to 408 residues: Echinulin prenyltransferase 2 (408 aa).

Positions 94, 181, 183, 248, 250, 252, 334, 336, 400, and 404 each coordinate dimethylallyl diphosphate.

The protein belongs to the tryptophan dimethylallyltransferase family.

It catalyses the reaction preechinulin + dimethylallyl diphosphate = tardioxopiperazine B + diphosphate. The catalysed reaction is preechinulin + dimethylallyl diphosphate = tardioxopiperazine A + diphosphate. The enzyme catalyses tardioxopiperazine A + dimethylallyl diphosphate = echinulin + diphosphate. It carries out the reaction tardioxopiperazine A + dimethylallyl diphosphate = variecolorin L + diphosphate. It catalyses the reaction neoechinulin A + dimethylallyl diphosphate = variecolorin G + diphosphate. The catalysed reaction is neoechinulin A + dimethylallyl diphosphate = isoechinulin A + diphosphate. The enzyme catalyses isoechinulin A + dimethylallyl diphosphate = dehydroechinulin + diphosphate. It carries out the reaction neoechinulin B + dimethylallyl diphosphate = isoechinulin B + diphosphate. It participates in secondary metabolite biosynthesis. Its pathway is alkaloid biosynthesis. Prenyltransferase; part of the gene cluster that mediates the biosynthesis of echinulin family alkaloid. The pathway begins with the biosynthesis of the cyclic dipeptide cyclo-L-Trp-L-Ala (cyclo-TA) by the NRPS echPS via condensation of L-alanine and L-tryptophan. The prenyltransferase echPT1 then catalyzes the first prenylation step, a reverse prenylation reaction at C2, to yield preechinulin. Preechinulin is the substrate of the cytochrome P450 monooxygenase echP450 that catalyzes the formation of the double bond between C10 and C11 to produce neoechulin A. The unique prenyltransferase echPT2 functions as a competitive enzyme with echP450 for preechinulin metabolization and uses preechinulin for effective regiospecific prenylations. Preechinulin is prenylated by echPT2 at C5 or C7. C7-prenylation leads to accumulation of tardioxopiperazine B without further modification by echPT2. In contrast, the C5-prenylated tardioxopiperazine A can be prenylated again by echPT2, predominantly at C7 to form echinulin or less frequently at C4 to give variecolorin L. EchPT2 also accepts neoechilunin A to produce varlecolorin G (prenylation at C5) or isoechinulin A (prenylation at C7). EchPT2 further converts isoechinulin A into dehydroechinulin. Moreover, a yet unidentified enzyme can also convert neoechilunin A into neoechilunin B by introducing a double bond between positions C14 and C17 and thus provides a further substrate to echPT2 for C5 and C7 prenylation. The sequence is that of Echinulin prenyltransferase 2 from Aspergillus ruber (Eurotium rubrum).